The following is a 4241-amino-acid chain: Intermembrane lipid transfer protein vps13E (4241 aa).

Residues 5-97 (ILPGLLKKIL…GPKDIINTFS (93 aa)) enclose the Chorein N-terminal domain. Residues 120–140 (IDSNSNNNNKKNAPSSSSSND) show a composition bias toward low complexity. Disordered stretches follow at residues 120–143 (IDSN…DDFF), 234–340 (LSKN…QQQQ), 942–986 (LGTG…VEKE), 1220–1256 (NNNN…NQKP), 1345–1369 (TTTT…QNRH), 1534–1571 (KPSS…YNNN), 2148–2192 (QQQQ…PNVH), and 2217–2282 (VTEK…NNIN). Polar residues predominate over residues 234–254 (LSKNTSTHQQQQPTFNPYVGS). The span at 255-264 (QQQQQQQPQQ) shows a compositional bias: low complexity. Residues 279-289 (FMNNKNSDEGI) show a composition bias toward polar residues. Low complexity-rich tracts occupy residues 290 to 313 (SSSS…LNDN), 325 to 340 (QPTP…QQQQ), and 942 to 952 (LGTGNGINNNN). Over residues 968–986 (DDGKYPEQDDLDDSKVEKE) the composition is skewed to basic and acidic residues. A compositionally biased stretch (low complexity) spans 1220-1253 (NNNNNNNNNNNNNNNNNNNNNRNLNNNNNNNNNN). Over residues 1352-1369 (RYHHQNHHNHQHKKQNRH) the composition is skewed to basic residues. Low complexity-rich tracts occupy residues 1538–1551 (KDNN…NNSD), 1559–1571 (DSSS…YNNN), and 2148–2177 (QQQQ…NNNN). Positions 2178 to 2188 (VSGNTINNKSV) are enriched in polar residues. Residues 2246 to 2259 (SDDDDDEGEDEDIG) show a composition bias toward acidic residues. Positions 2265–2282 (DHSTSSAPTSRSNYNNIN) are enriched in polar residues. An SHR-BD domain is found at 2825-3134 (KIVFYNQYWI…IPYVWDLPLE (310 aa)). Disordered stretches follow at residues 3973 to 4000 (PTTT…YPTE), 4059 to 4094 (YQHS…RQLQ), and 4109 to 4140 (KSMA…SGSG). Residues 3974 to 3984 (TTTTTTNTTTT) show a composition bias toward low complexity. Residues 3985-4000 (PYQSSQNIHSTPYPTE) are compositionally biased toward polar residues. Over residues 4128–4140 (SNNRLSLTPSGSG) the composition is skewed to polar residues.

This sequence belongs to the VPS13 family.

It is found in the membrane. Mediates the transfer of lipids between membranes at organelle contact sites. This Dictyostelium discoideum (Social amoeba) protein is Intermembrane lipid transfer protein vps13E (vps13E).